Consider the following 156-residue polypeptide: Ribosome maturation factor RimP (156 aa).

The protein belongs to the RimP family.

The protein localises to the cytoplasm. In terms of biological role, required for maturation of 30S ribosomal subunits. The protein is Ribosome maturation factor RimP of Treponema pallidum (strain Nichols).